We begin with the raw amino-acid sequence, 447 residues long: uncharacterized protein (447 aa).

A run of 12 helical transmembrane segments spans residues 17 to 37 (IMMM…SSSA), 40 to 60 (VAGP…LFIM), 95 to 115 (IYWK…AIFI), 118 to 138 (WLPG…VTIV), 154 to 174 (AMIK…LLFV), 200 to 220 (GLIT…IIGV), 243 to 263 (IVAF…WNQV), 289 to 311 (AVIL…RILY), 333 to 353 (MFAI…SLFA), 361 to 381 (LMGS…FAHL), 393 to 415 (YYVK…ILIG), and 419 to 441 (TTSI…AYLV).

Belongs to the amino acid-polyamine-organocation (APC) superfamily.

The protein localises to the cell membrane. Functionally, may participate in leucine metabolism. May transport leucine or a compound related to leucine metabolism. This is an uncharacterized protein from Bacillus subtilis (strain 168).